The primary structure comprises 74 residues: Ubiquitin-like protein FUBI (74 aa).

This sequence belongs to the ubiquitin family.

This chain is Ubiquitin-like protein FUBI (FAU), found in Pongo abelii (Sumatran orangutan).